A 971-amino-acid polypeptide reads, in one-letter code: uncharacterized protein (971 aa).

This is an uncharacterized protein from Borreliella burgdorferi (strain ATCC 35210 / DSM 4680 / CIP 102532 / B31) (Borrelia burgdorferi).